The primary structure comprises 198 residues: Protoplast secreted protein 2 (198 aa).

Positions 1 to 21 (MPRVAIIIYTLYGHVAATAEA) are cleaved as a signal peptide. Residues 22 to 191 (EKKGIEAAGG…QVHEIQGKTF (170 aa)) enclose the Flavodoxin-like domain.

The protein belongs to the WrbA family.

It is found in the secreted. The protein is Protoplast secreted protein 2 (PST2) of Saccharomyces cerevisiae (strain ATCC 204508 / S288c) (Baker's yeast).